A 288-amino-acid chain; its full sequence is NAD(P)H-hydrate epimerase (288 aa).

The N-terminal 48 residues, 1–48 (MSALRALLGLGLLAAGSRLRRVPGRAGACPAGSAWWEARRPHSGGGGE), are a transit peptide targeting the mitochondrion. Residues 65 to 275 (AQAVDEELFN…ALEKKYQLNL (211 aa)) form the YjeF N-terminal domain. 119–123 (NNGGD) provides a ligand contact to (6S)-NADPHX. N120 is a binding site for K(+). K144 carries the post-translational modification N6-succinyllysine. K(+) is bound at residue D185. (6S)-NADPHX contacts are provided by residues 189 to 195 (GFSFKGD) and D218. A K(+)-binding site is contributed by S221.

This sequence belongs to the NnrE/AIBP family. Homodimer. Interacts with APOA1 and APOA2. K(+) serves as cofactor. Post-translationally, undergoes physiological phosphorylation during sperm capacitation, downstream to PKA activation.

The protein localises to the mitochondrion. Its subcellular location is the secreted. The catalysed reaction is (6R)-NADHX = (6S)-NADHX. It catalyses the reaction (6R)-NADPHX = (6S)-NADPHX. Catalyzes the epimerization of the S- and R-forms of NAD(P)HX, a damaged form of NAD(P)H that is a result of enzymatic or heat-dependent hydration. This is a prerequisite for the S-specific NAD(P)H-hydrate dehydratase to allow the repair of both epimers of NAD(P)HX. Accelerates cholesterol efflux from endothelial cells to high-density lipoprotein (HDL) and thereby regulates angiogenesis. This Canis lupus familiaris (Dog) protein is NAD(P)H-hydrate epimerase.